A 327-amino-acid chain; its full sequence is GTPase Obg (327 aa).

Positions 1-159 (MQFIDQANII…WEVQLELKLL (159 aa)) constitute an Obg domain. Positions 160 to 327 (AEVGIIGLPN…SLLSEVWKRI (168 aa)) constitute an OBG-type G domain. ATP contacts are provided by residues 166-173 (GLPNAGKS), 191-195 (FTTLI), 213-216 (DIPG), 280-283 (NKIE), and 309-311 (SSS). S173 and T193 together coordinate Mg(2+).

It belongs to the TRAFAC class OBG-HflX-like GTPase superfamily. OBG GTPase family. In terms of assembly, monomer. Mg(2+) is required as a cofactor.

It localises to the cytoplasm. Functionally, an essential GTPase which binds GTP, GDP and possibly (p)ppGpp with moderate affinity, with high nucleotide exchange rates and a fairly low GTP hydrolysis rate. Plays a role in control of the cell cycle, stress response, ribosome biogenesis and in those bacteria that undergo differentiation, in morphogenesis control. The chain is GTPase Obg from Prochlorococcus marinus (strain AS9601).